The primary structure comprises 150 residues: UPF0506 protein SJCHGC09643 (150 aa).

An N-terminal signal peptide occupies residues 1–18 (MNTCIQLLILCLVTVINS). N-linked (GlcNAc...) asparagine glycosylation is found at Asn-20, Asn-32, Asn-48, and Asn-110. Cystine bridges form between Cys-116–Cys-130, Cys-123–Cys-134, and Cys-129–Cys-139.

The protein belongs to the UPF0506 family.

The protein localises to the secreted. The polypeptide is UPF0506 protein SJCHGC09643 (Schistosoma japonicum (Blood fluke)).